A 522-amino-acid chain; its full sequence is Tyrosine-protein phosphatase 1 (522 aa).

Residues 32 to 63 (RSNSSISLSSSSHSSFSRMGSLGSLPTNSGSS) are disordered. The segment covering 33–63 (SNSSISLSSSSHSSFSRMGSLGSLPTNSGSS) has biased composition (low complexity). The Tyrosine-protein phosphatase domain occupies 97-471 (IKEEFRLLEE…LFCYKTILDE (375 aa)). The active-site Phosphocysteine intermediate is Cys-310. Positions 327–426 (MKKLDHYFKQ…DDAAESDLKY (100 aa)) are PTPase insert (Asn-rich). The span at 382 to 410 (NNNNNNNLNNNNNINNNSNGSNNTPQTEP) shows a compositional bias: low complexity. Residues 382 to 420 (NNNNNNNLNNNNNINNNSNGSNNTPQTEPNNEEDDDDAA) are disordered. Residues 411–420 (NNEEDDDDAA) show a composition bias toward acidic residues.

It belongs to the protein-tyrosine phosphatase family. Non-receptor class subfamily. Expressed predominantly in anterior-like cells and to a lesser degree in prestalk cells.

The protein localises to the cytoplasm. The protein resides in the cell membrane. It catalyses the reaction O-phospho-L-tyrosyl-[protein] + H2O = L-tyrosyl-[protein] + phosphate. Functionally, may have a role in growth and in the early stages of development. Affects the timing of development. The sequence is that of Tyrosine-protein phosphatase 1 (ptpA1-1) from Dictyostelium discoideum (Social amoeba).